A 185-amino-acid polypeptide reads, in one-letter code: Kunitz-type serine protease inhibitor DrTI (185 aa).

2 disulfide bridges follow: cysteine 44–cysteine 89 and cysteine 139–cysteine 147.

Belongs to the protease inhibitor I3 (leguminous Kunitz-type inhibitor) family.

Its subcellular location is the secreted. Functionally, inhibits bovine trypsin and human plasma kallikrein. This chain is Kunitz-type serine protease inhibitor DrTI, found in Delonix regia (Royal poinciana).